A 311-amino-acid polypeptide reads, in one-letter code: Mediator of RNA polymerase II transcription subunit 27 (311 aa).

The protein belongs to the Mediator complex subunit 27 family. Component of the Mediator complex.

It is found in the nucleus. Component of the Mediator complex, a coactivator involved in the regulated transcription of nearly all RNA polymerase II-dependent genes. Mediator functions as a bridge to convey information from gene-specific regulatory proteins to the basal RNA polymerase II transcription machinery. Mediator is recruited to promoters by direct interactions with regulatory proteins and serves as a scaffold for the assembly of a functional preinitiation complex with RNA polymerase II and the general transcription factors. Required for the development of dopaminergic amacrine cells in the retina. May also negatively regulate the development of rod photoreceptor cells. The protein is Mediator of RNA polymerase II transcription subunit 27 (med27) of Danio rerio (Zebrafish).